Here is a 129-residue protein sequence, read N- to C-terminus: Large ribosomal subunit protein eL32 (129 aa).

Belongs to the eukaryotic ribosomal protein eL32 family.

The sequence is that of Large ribosomal subunit protein eL32 (rpl32e) from Methanosarcina acetivorans (strain ATCC 35395 / DSM 2834 / JCM 12185 / C2A).